We begin with the raw amino-acid sequence, 333 residues long: Transcription initiation factor IIB (333 aa).

The TFIIB-type zinc-finger motif lies at 33-64; it reads EVYKCPICGNDKFVYNYERGEAVCIVCGAVVQ. Residues Cys37, Cys40, Cys56, and Cys59 each contribute to the Zn(2+) site. Repeat copies occupy residues 149–232 and 243–324.

This sequence belongs to the TFIIB family.

In terms of biological role, stabilizes TBP binding to an archaeal box-A promoter. Also responsible for recruiting RNA polymerase II to the pre-initiation complex (DNA-TBP-TFIIB). This Pyrobaculum aerophilum (strain ATCC 51768 / DSM 7523 / JCM 9630 / CIP 104966 / NBRC 100827 / IM2) protein is Transcription initiation factor IIB.